We begin with the raw amino-acid sequence, 279 residues long: Diaminopimelate epimerase (279 aa).

Substrate is bound by residues Asn-13 and Asn-66. Cys-75 (proton donor) is an active-site residue. Substrate is bound by residues 76–77, Asn-164, Asn-197, and 215–216; these read GN and ER. The Proton acceptor role is filled by Cys-224. Position 225-226 (225-226) interacts with substrate; sequence GT.

It belongs to the diaminopimelate epimerase family. As to quaternary structure, homodimer.

The protein localises to the cytoplasm. The enzyme catalyses (2S,6S)-2,6-diaminopimelate = meso-2,6-diaminopimelate. It participates in amino-acid biosynthesis; L-lysine biosynthesis via DAP pathway; DL-2,6-diaminopimelate from LL-2,6-diaminopimelate: step 1/1. In terms of biological role, catalyzes the stereoinversion of LL-2,6-diaminopimelate (L,L-DAP) to meso-diaminopimelate (meso-DAP), a precursor of L-lysine and an essential component of the bacterial peptidoglycan. In Nostoc punctiforme (strain ATCC 29133 / PCC 73102), this protein is Diaminopimelate epimerase.